Reading from the N-terminus, the 310-residue chain is Prohibitin-2 (310 aa).

The chain crosses the membrane as a helical; Signal-anchor for type II membrane protein span at residues 38–58 (FAGLGGLLLLGGGALFINNAL). The interaction with ATG8 stretch occupies residues 130-144 (DVVQLPTIYRTLGQD). The AIM signature appears at 138 to 141 (YRTL). A coiled-coil region spans residues 212-253 (NAVEAKQIAQQDAQRAAFVVDKARQEKQGMVVRAQGEAKSAE).

It belongs to the prohibitin family. As to quaternary structure, the mitochondrial prohibitin complex consists of two subunits (PHB1 and PHB2). The subunits assemble into a membrane-associated ring-shaped supercomplex of approximately 1 mDa. The mitochondrial prohibitin complex interacts with the m-AAA protease, a heterohexamer composed of YTA12/RCA1 and YTA10/AFG3. The mitochondrial prohibitin complex interacts with ATG8 and the interaction may support mitophagosome assembly. Post-translationally, the N-terminus is blocked.

The protein localises to the mitochondrion inner membrane. Its function is as follows. Prohibitin probably acts as a holdase/unfoldase for the stabilization of newly synthesized mitochondrial proteins. Involved in mitophagy; may act as an adapter for ATG8 that supports mitophagosome assembly. Negatively regulates the proteolytic processing of ATG32 via the i-AAA protease. Acts as a negative regulator of the m-AAA protease. The sequence is that of Prohibitin-2 (PHB2) from Saccharomyces cerevisiae (strain ATCC 204508 / S288c) (Baker's yeast).